Here is a 260-residue protein sequence, read N- to C-terminus: Global transcriptional regulator CodY (260 aa).

Residues 1 to 159 (MPNLLEKTRK…SSTVVGIQLL (159 aa)) are GAF domain. The H-T-H motif DNA-binding region spans 207–226 (ASVIADRIGITRSVIVNALR).

Belongs to the CodY family.

Its subcellular location is the cytoplasm. DNA-binding global transcriptional regulator which is involved in the adaptive response to starvation and acts by directly or indirectly controlling the expression of numerous genes in response to nutrient availability. During rapid exponential growth, CodY is highly active and represses genes whose products allow adaptation to nutrient depletion. In Streptococcus equi subsp. equi (strain 4047), this protein is Global transcriptional regulator CodY.